A 323-amino-acid chain; its full sequence is uncharacterized protein (323 aa).

An S4 RNA-binding domain is found at 16–95; it reads QRIDQFCLKI…DKLKIIFEDE (80 aa). D148 is a catalytic residue.

It belongs to the pseudouridine synthase RluA family.

The catalysed reaction is a uridine in RNA = a pseudouridine in RNA. This is an uncharacterized protein from Mycoplasma genitalium (strain ATCC 33530 / DSM 19775 / NCTC 10195 / G37) (Mycoplasmoides genitalium).